The following is a 95-amino-acid chain: Protein TusB (95 aa).

The protein belongs to the DsrH/TusB family. Heterohexamer, formed by a dimer of trimers. The hexameric TusBCD complex contains 2 copies each of TusB, TusC and TusD. The TusBCD complex interacts with TusE.

It is found in the cytoplasm. Part of a sulfur-relay system required for 2-thiolation of 5-methylaminomethyl-2-thiouridine (mnm(5)s(2)U) at tRNA wobble positions. The sequence is that of Protein TusB from Escherichia coli O45:K1 (strain S88 / ExPEC).